The sequence spans 203 residues: Histidine biosynthesis bifunctional protein HisIE (203 aa).

A phosphoribosyl-AMP cyclohydrolase region spans residues Met1 to Phe114. Residues Leu115–Gln203 are phosphoribosyl-ATP pyrophosphohydrolase.

The protein in the N-terminal section; belongs to the PRA-CH family. It in the C-terminal section; belongs to the PRA-PH family.

It is found in the cytoplasm. The enzyme catalyses 1-(5-phospho-beta-D-ribosyl)-ATP + H2O = 1-(5-phospho-beta-D-ribosyl)-5'-AMP + diphosphate + H(+). It carries out the reaction 1-(5-phospho-beta-D-ribosyl)-5'-AMP + H2O = 1-(5-phospho-beta-D-ribosyl)-5-[(5-phospho-beta-D-ribosylamino)methylideneamino]imidazole-4-carboxamide. It participates in amino-acid biosynthesis; L-histidine biosynthesis; L-histidine from 5-phospho-alpha-D-ribose 1-diphosphate: step 2/9. Its pathway is amino-acid biosynthesis; L-histidine biosynthesis; L-histidine from 5-phospho-alpha-D-ribose 1-diphosphate: step 3/9. In Shigella sonnei (strain Ss046), this protein is Histidine biosynthesis bifunctional protein HisIE.